We begin with the raw amino-acid sequence, 361 residues long: (S)-coclaurine N-methyltransferase (361 aa).

Residues Ser-101, Gly-139, Asn-163, Gln-167, Asp-189, Ile-190, and Val-205 each contribute to the S-adenosyl-L-methionine site. The active site involves Cys-336.

Belongs to the CFA/CMAS family. In terms of assembly, homodimer. As to expression, highly expressed in rhizomes. Detected in roots, petioles, flower buds and leaves. Expressed between the developing stele and ground tissues near the root apical meristem, in the immature endodermis, the pericycle and the spokes of developing xylem in the apical region of the root and in the protoderm of leaf primordia in rhizomes.

It localises to the cytoplasm. The catalysed reaction is norreticuline + S-adenosyl-L-methionine = reticuline + S-adenosyl-L-homocysteine + H(+). It catalyses the reaction (S)-coclaurine + S-adenosyl-L-methionine = (S)-N-methylcoclaurine + S-adenosyl-L-homocysteine + H(+). It carries out the reaction heliamine + S-adenosyl-L-methionine = N-methylheliamine + S-adenosyl-L-homocysteine + H(+). It participates in alkaloid biosynthesis. Involved in the biosynthesis of protoberberine alkaloids. N-methyltransferase with a substrate preference for (R,S)-norreticuline but also active with dimethoxytetrahydroisoquinoline. The protein is (S)-coclaurine N-methyltransferase of Thalictrum flavum subsp. glaucum (Yellow meadow rue).